Reading from the N-terminus, the 377-residue chain is Cyclin-I (377 aa).

A disordered region spans residues 356-377 (TDLSRQEGHASPCPPLQPVSVM). Residues 367 to 377 (PCPPLQPVSVM) are compositionally biased toward pro residues.

The protein belongs to the cyclin family.

The protein is Cyclin-I (Ccni) of Mus musculus (Mouse).